Here is a 720-residue protein sequence, read N- to C-terminus: NAD(+) hydrolase ApTIR (720 aa).

Residues 1-131 (MRYDAFISYS…AVPPALRGVF (131 aa)) enclose the TIR domain. Residues 10-11 (SH) and A48 contribute to the NAD(+) site. The active site involves E84. A helical transmembrane segment spans residues 192–211 (GALAVVCALLLLVAGTAVAW). Disordered stretches follow at residues 231 to 275 (ATAA…AVAE) and 292 to 359 (EGIA…EEAV). 2 stretches are compositionally biased toward basic and acidic residues: residues 256 to 268 (EQQR…EEAR) and 307 to 359 (AEAR…EEAV). Residues 313 to 362 (RGVADAEKAKANRAAAEAERQRKIAADEQRKAHEAAAEAERQREEAVKQQ) adopt a coiled-coil conformation. 7 WD repeats span residues 420–459 (GHTA…APRR), 465–504 (SSTA…APRR), 510–549 (GHTD…APRR), 555–594 (DHTA…APRR), 600–639 (GHTA…APRR), 645–684 (GHTA…APRR), and 690–720 (GHTD…CCGM).

The protein localises to the cell membrane. The catalysed reaction is NAD(+) + H2O = ADP-D-ribose + nicotinamide + H(+). Functionally, NAD(+) hydrolase (NADase) that catalyzes cleavage of NAD(+) into ADP-D-ribose (ADPR) and nicotinamide. This chain is NAD(+) hydrolase ApTIR, found in Actinoplanes sp. (strain ATCC 31044 / CBS 674.73 / SE50/110).